The sequence spans 219 residues: Mediator of RNA polymerase II transcription subunit 20b (219 aa).

Belongs to the Mediator complex subunit 20 family. Component of the Mediator complex.

The protein resides in the nucleus. Component of the Mediator complex, a coactivator involved in the regulated transcription of nearly all RNA polymerase II-dependent genes. Mediator functions as a bridge to convey information from gene-specific regulatory proteins to the basal RNA polymerase II transcription machinery. The Mediator complex, having a compact conformation in its free form, is recruited to promoters by direct interactions with regulatory proteins and serves for the assembly of a functional preinitiation complex with RNA polymerase II and the general transcription factors. The protein is Mediator of RNA polymerase II transcription subunit 20b (MED20B) of Arabidopsis thaliana (Mouse-ear cress).